The sequence spans 449 residues: Protein phosphatase fem-2 (449 aa).

Residues 28–34 (EEAFADE) are interaction with fem-1 and fem-3. Residues 54 to 56 (IRF) form an interaction with fem-3 region. The PPM-type phosphatase domain maps to 160-424 (GIHVSGDQLK…DNVSVVIGFL (265 aa)). Mg(2+) contacts are provided by Asp202, Gly203, Asp370, and Asp415.

This sequence belongs to the PP2C family. Component of a complex containing fem-1, fem-2 and fem-3. Interacts (via N-terminus) with fem-1 and fem-3. Component of the CBC(fem-1) E3 ubiquitin-protein ligase complex, at least composed of cul-2, elc-1, tra-1, fem-1, fem-2 and fem-3; mediates the ubiquitination and subsequent proteasomal degradation of tra-1. Interacts with tra-1. Interacts with sel-10. Mg(2+) is required as a cofactor. Requires Mn(2+) as cofactor.

The enzyme catalyses O-phospho-L-seryl-[protein] + H2O = L-seryl-[protein] + phosphate. The catalysed reaction is O-phospho-L-threonyl-[protein] + H2O = L-threonyl-[protein] + phosphate. Its function is as follows. Dephosphorylates auto-phosphorylated Ca(2+)/calmodulin-dependent protein kinase unc-43/CAMKII in vitro. Involved in the regulation of sex determination. Together with fem-3, required for male sexual development by promoting the proteasomal-mediated degradation of tra-1, a transcription repressor of male-specific genes. Promotes apoptosis. The polypeptide is Protein phosphatase fem-2 (Caenorhabditis elegans).